A 67-amino-acid polypeptide reads, in one-letter code: MPYHYLFLALFTYLATSNVVSGSTQACLPVGPRKNGMNVNFYKYSLLDSTTYSYPQYMTSGYASNWN.

This sequence belongs to the flocculin family.

This is an uncharacterized protein from Saccharomyces cerevisiae (strain ATCC 204508 / S288c) (Baker's yeast).